The primary structure comprises 167 residues: Urease accessory protein UreE (167 aa).

The tract at residues 137 to 158 (EAGAYQSAPHGHSHSHAHGHDH) is disordered.

It belongs to the UreE family.

The protein resides in the cytoplasm. Involved in urease metallocenter assembly. Binds nickel. Probably functions as a nickel donor during metallocenter assembly. This chain is Urease accessory protein UreE, found in Pseudomonas putida (strain ATCC 700007 / DSM 6899 / JCM 31910 / BCRC 17059 / LMG 24140 / F1).